The sequence spans 309 residues: Taste receptor type 2 member 8 (309 aa).

Residues 1 to 7 (MFSPADN) lie on the Extracellular side of the membrane. The chain crosses the membrane as a helical span at residues 8 to 28 (IFIILITGEFILGILGNGYIA). At 29 to 50 (LVNWIDWIKKKKISTVDYILTN) the chain is on the cytoplasmic side. A helical transmembrane segment spans residues 51-71 (LVIARICLISVMVVNGIVIVL). At 72–82 (NPDVYTKNKQQ) the chain is on the extracellular side. Residues 83-103 (IVIFTFWTFANYLNMWITTCL) form a helical membrane-spanning segment. Residues 104–131 (NVFYFLKIASSSHPLFLWLKWKIDMVVH) are Cytoplasmic-facing. A helical membrane pass occupies residues 132–152 (WILLGCFAISLLVSLIAAIVL). Residues 153–184 (SCDYRFHAIAKHKRNITEMFXVSKIPYFEPLT) lie on the Extracellular side of the membrane. N-linked (GlcNAc...) asparagine glycosylation occurs at asparagine 167. Residues 185 to 205 (LFNLFAIVPFIVSLISFFLLV) form a helical membrane-spanning segment. The Cytoplasmic segment spans residues 206-239 (RSLWRHTKQIKLYATGSRDPSTEVHVRAIKTMTS). A helical transmembrane segment spans residues 240–260 (FIFFFFLYFISSILMTFSYLM). At 261–266 (TKYKLA) the chain is on the extracellular side. Residues 267 to 287 (VEFGEIAAILYPLGHSLILIV) traverse the membrane as a helical segment. The Cytoplasmic portion of the chain corresponds to 288–309 (LNNKLRQIFVRMLTCRKIACVI).

Belongs to the G-protein coupled receptor T2R family.

The protein localises to the membrane. In terms of biological role, receptor that may play a role in the perception of bitterness and is gustducin-linked. May play a role in sensing the chemical composition of the gastrointestinal content. The activity of this receptor may stimulate alpha gustducin, mediate PLC-beta-2 activation and lead to the gating of TRPM5. The polypeptide is Taste receptor type 2 member 8 (TAS2R8) (Pan troglodytes (Chimpanzee)).